The sequence spans 854 residues: DNA mismatch repair protein MutS (854 aa).

614-621 (GPNMGGKS) is a binding site for ATP.

This sequence belongs to the DNA mismatch repair MutS family.

Its function is as follows. This protein is involved in the repair of mismatches in DNA. It is possible that it carries out the mismatch recognition step. This protein has a weak ATPase activity. The polypeptide is DNA mismatch repair protein MutS (Yersinia pestis bv. Antiqua (strain Antiqua)).